The primary structure comprises 213 residues: Orotate phosphoribosyltransferase (213 aa).

Position 26 (Lys26) interacts with 5-phospho-alpha-D-ribose 1-diphosphate. 34–35 (FF) lines the orotate pocket. 5-phospho-alpha-D-ribose 1-diphosphate is bound by residues 72-73 (YK), Arg99, Lys100, Lys103, His105, and 124-132 (DDVITAGTA). Thr128 and Arg156 together coordinate orotate.

This sequence belongs to the purine/pyrimidine phosphoribosyltransferase family. PyrE subfamily. As to quaternary structure, homodimer. It depends on Mg(2+) as a cofactor.

The catalysed reaction is orotidine 5'-phosphate + diphosphate = orotate + 5-phospho-alpha-D-ribose 1-diphosphate. The protein operates within pyrimidine metabolism; UMP biosynthesis via de novo pathway; UMP from orotate: step 1/2. In terms of biological role, catalyzes the transfer of a ribosyl phosphate group from 5-phosphoribose 1-diphosphate to orotate, leading to the formation of orotidine monophosphate (OMP). The sequence is that of Orotate phosphoribosyltransferase from Shigella flexneri.